Here is a 448-residue protein sequence, read N- to C-terminus: Trigger factor (448 aa).

In terms of domain architecture, PPIase FKBP-type spans 172-257 (GDRVTVDFVG…MKKIEWPHLP (86 aa)).

It belongs to the FKBP-type PPIase family. Tig subfamily.

The protein localises to the cytoplasm. The catalysed reaction is [protein]-peptidylproline (omega=180) = [protein]-peptidylproline (omega=0). Involved in protein export. Acts as a chaperone by maintaining the newly synthesized protein in an open conformation. Functions as a peptidyl-prolyl cis-trans isomerase. This Paraburkholderia phymatum (strain DSM 17167 / CIP 108236 / LMG 21445 / STM815) (Burkholderia phymatum) protein is Trigger factor.